Consider the following 215-residue polypeptide: Osteoclast-stimulating factor 1 (215 aa).

Serine 2 carries the post-translational modification N-acetylserine. One can recognise an SH3 domain in the interval 12–71 (GQVKVFRALYTFEPRTPDELYFEEGDIIYITDMSDTSWWKGTCKGRTGLIPSNYVAEQAE). ANK repeat units follow at residues 72-101 (SIDN…GVNG), 105-135 (AGST…ELNQ), and 139-168 (LGDT…RTDL). Residues 192 to 215 (KQQGTDGARTLSNAEDYLDDEDSD) are disordered. Residue threonine 201 is modified to Phosphothreonine. Phosphoserine is present on residues serine 203 and serine 214.

As to quaternary structure, interacts with C-SRC and SMN1. Interacts with FASLG.

The protein resides in the cytoplasm. Induces bone resorption, acting probably through a signaling cascade which results in the secretion of factor(s) enhancing osteoclast formation and activity. This is Osteoclast-stimulating factor 1 (Ostf1) from Mus musculus (Mouse).